The primary structure comprises 328 residues: DNA polymerase III subunit delta' (328 aa).

As to quaternary structure, DNA polymerase III contains a core (composed of alpha, epsilon and theta chains) that associates with a tau subunit. This core dimerizes to form the POLIII' complex. PolIII' associates with the gamma complex (composed of gamma, delta, delta', psi and chi chains) and with the beta chain to form the complete DNA polymerase III complex.

It carries out the reaction DNA(n) + a 2'-deoxyribonucleoside 5'-triphosphate = DNA(n+1) + diphosphate. DNA polymerase III is a complex, multichain enzyme responsible for most of the replicative synthesis in bacteria. This DNA polymerase also exhibits 3' to 5' exonuclease activity. The sequence is that of DNA polymerase III subunit delta' (holB) from Buchnera aphidicola subsp. Schizaphis graminum (strain Sg).